A 148-amino-acid polypeptide reads, in one-letter code: Wound-induced proteinase inhibitor 2 (148 aa).

An N-terminal signal peptide occupies residues 1–25 (MAVHKEVNFVAYLLIVLGMFLYVDA). The stretch at 26–81 (KACTRECGNLGFGICPRSEGSPLNPICINCCSGYKGCNYYNSFGKFICEGESDPKR) is one 1; trypsin-inhibitory repeat. 8 cysteine pairs are disulfide-bonded: cysteine 28-cysteine 116, cysteine 32-cysteine 112, cysteine 40-cysteine 122, cysteine 52-cysteine 89, cysteine 55-cysteine 73, cysteine 56-cysteine 85, cysteine 62-cysteine 98, and cysteine 115-cysteine 133. A 2; chymotrypsin-inhibitory repeat occupies 83–141 (NACTFNCDPNIAYSRCPRSQGKSLIYPTGCTTCCTGYKGCYYFGKDGKFVCEGESDEPK).

This sequence belongs to the protease inhibitor I20 (potato type II proteinase inhibitor) family.

The protein resides in the secreted. Potent inhibitor of both trypsin and chymotrypsin. This chain is Wound-induced proteinase inhibitor 2, found in Solanum lycopersicum (Tomato).